The sequence spans 345 residues: Esterase (345 aa).

The signal sequence occupies residues Met-1–Ala-39. Cystine bridges form between Cys-73/Cys-103, Cys-156/Cys-180, and Cys-236/Cys-294.

Its subcellular location is the secreted. This chain is Esterase (estA), found in Streptomyces scabiei.